We begin with the raw amino-acid sequence, 2188 residues long: Genome polyprotein (2188 aa).

The short motif at 772–774 is the Cell attachment site element; that stretch reads RGD. Residues 795 to 889 enclose the LRAT domain; sequence LAYLDRGFYK…DIFGTHTLSQ (95 aa). The For protein 2A H-NC role is filled by histidine 805. Cysteine 874 serves as the catalytic For protein 2A H-NC; Acyl-thioester intermediate. Residues 1165-1326 enclose the SF3 helicase domain; it reads FQELARIPNR…KAYSKSGKLN (162 aa). Residue 1193 to 1200 participates in ATP binding; that stretch reads GEPGQGKS. Tyrosine 1502 is subject to O-(5'-phospho-RNA)-tyrosine. The 191-residue stretch at 1526–1716 folds into the Peptidase C3 domain; it reads APYDGQLEHI…IPFNFLKNDM (191 aa). Catalysis depends on for protease 3C activity residues histidine 1566, aspartate 1604, and cysteine 1678. The active-site Acyl-thioester intermediate is cysteine 1905. The 115-residue stretch at 1953–2067 folds into the RdRp catalytic domain; it reads DYNYEMDYSQ…SLDREIEPER (115 aa). The Mg(2+) site is built by aspartate 1959 and aspartate 2053.

Belongs to the picornaviruses polyprotein family. As to quaternary structure, interacts with capsid protein VP1 and capsid protein VP3 to form heterotrimeric protomers. Five protomers subsequently associate to form pentamers which serve as building blocks for the capsid. In terms of assembly, interacts with capsid protein VP0, and capsid protein VP3 to form heterotrimeric protomers. Five protomers subsequently associate to form pentamers which serve as building blocks for the capsid. Interacts with capsid protein VP0 and capsid protein VP1 to form heterotrimeric protomers. Five protomers subsequently associate to form pentamers which serve as building blocks for the capsid. As to quaternary structure, homohexamer; forms a hexameric ring structure with 6-fold symmetry characteristic of AAA+ ATPases. In terms of assembly, homodimer. Interacts with host ACBD3. Interacts with RNA-directed RNA polymerase. As to quaternary structure, interacts with Viral protein genome-linked. Mg(2+) is required as a cofactor. Post-translationally, VPg is uridylylated by the polymerase and is covalently linked to the 5'-end of genomic RNA. This uridylylated form acts as a nucleotide-peptide primer for the polymerase. Specific enzymatic cleavages yield mature proteins. All cleavages are catalyzed by P3C.

It localises to the virion. It is found in the host cytoplasm. The protein resides in the host nucleus. The protein localises to the host nucleolus. Its subcellular location is the host cytoplasmic vesicle membrane. The catalysed reaction is RNA(n) + a ribonucleoside 5'-triphosphate = RNA(n+1) + diphosphate. It carries out the reaction a ribonucleoside 5'-triphosphate + H2O = a ribonucleoside 5'-diphosphate + phosphate + H(+). It catalyses the reaction Selective cleavage of Gln-|-Gly bond in the poliovirus polyprotein. In other picornavirus reactions Glu may be substituted for Gln, and Ser or Thr for Gly.. Forms an icosahedral capsid of pseudo T=3 symmetry together with capsid proteins VP1 and VP3. The capsid is 300 Angstroms in diameter, composed of 60 copies of each capsid protein and enclosing the viral positive strand RNA genome. Capsid proteins interact with host alpha-V/beta-3 integrin heterodimer to provide virion attachment target cell. This attachment induces virion internalization predominantly through clathrin-mediated endocytosis. Binds packaging signals present in the viral RNA. Functionally, forms an icosahedral capsid of pseudo T=3 symmetry together with capsid proteins VP0 and VP1. The capsid is 300 Angstroms in diameter, composed of 60 copies of each capsid protein and enclosing the viral positive strand RNA genome. Capsid proteins interact with host alpha-V/beta-3 integrin heterodimer to provide virion attachment target cell. This attachment induces virion internalization predominantly through clathrin-mediated endocytosis. Binds packaging signals present in the viral RNA. In terms of biological role, forms an icosahedral capsid of pseudo T=3 symmetry together with capsid proteins VP0 and VP3. The capsid is 300 Angstroms in diameter, composed of 60 copies of each capsid protein and enclosing the viral positive strand RNA genome. Capsid proteins interact with host alpha-V/beta-3 integrin heterodimer to provide virion attachment target cell. This attachment induces virion internalization predominantly through clathrin-mediated endocytosis. Binds packaging signals present in the viral RNA. Its function is as follows. Is not a protease. Plays an essential role in the virus replication cycle by acting as a viroporin. Creates a pore in the host endoplasmic reticulum and as a consequence releases Ca2+ in the cytoplasm of infected cell. In turn, high levels of cytoplasmic calcium may trigger membrane trafficking and transport of viral ER-associated proteins to viroplasms, sites of viral genome replication. Functionally, induces and associates with structural rearrangements of intracellular membranes. Displays RNA-binding, nucleotide binding and NTPase activities. May play a role in virion morphogenesis and viral RNA encapsidation by interacting with the capsid protein VP3. In terms of biological role, localizes the viral replication complex to the surface of membranous vesicles. It inhibits host cell endoplasmic reticulum-to-Golgi apparatus transport and causes the disassembly of the Golgi complex, possibly through GBF1 interaction. This would result in depletion of MHC, trail receptors and IFN receptors at the host cell surface. Plays an essential role in viral RNA replication by recruiting ACBD3 and PI4KB at the viral replication sites, thereby allowing the formation of the rearranged membranous structures where viral replication takes place. Its function is as follows. Acts as a primer for viral RNA replication and remains covalently bound to viral genomic RNA. VPg is uridylylated prior to priming replication into VPg-pUpU. The VPg-pUpU is then used as primer on the genomic RNA poly(A) by the RNA-dependent RNA polymerase to replicate the viral genome. Following genome release from the infecting virion in the cytoplasm, the VPg-RNA linkage is probably removed by host TDP2. During the late stage of the replication cycle, host TDP2 is excluded from sites of viral RNA synthesis and encapsidation, allowing for the generation of progeny virions. Cysteine protease that generates mature viral proteins from the precursor polyprotein. In addition to its proteolytic activity, it binds to viral RNA, and thus influences viral genome replication. RNA and substrate bind cooperatively to the protease. Functionally, replicates the viral genomic RNA on the surface of intracellular membranes. Covalently attaches UMP to a tyrosine of VPg, which is used to prime RNA synthesis. The positive stranded RNA genome is first replicated at virus induced membranous vesicles, creating a dsRNA genomic replication form. This dsRNA is then used as template to synthesize positive stranded RNA genomes. ss(+)RNA genomes are either translated, replicated or encapsidated. This chain is Genome polyprotein, found in Human parechovirus 5 (strain CT86-6760) (HPeV-5).